Reading from the N-terminus, the 241-residue chain is Large ribosomal subunit protein uL2 (241 aa).

The disordered stretch occupies residues 200-241 (AVDHPHGGGNRQHPGRPTTISRHAPAGRKVGSIAAKRTGKRR).

Belongs to the universal ribosomal protein uL2 family. As to quaternary structure, part of the 50S ribosomal subunit. Forms a bridge to the 30S subunit in the 70S ribosome.

Its function is as follows. One of the primary rRNA binding proteins. Required for association of the 30S and 50S subunits to form the 70S ribosome, for tRNA binding and peptide bond formation. It has been suggested to have peptidyltransferase activity; this is somewhat controversial. Makes several contacts with the 16S rRNA in the 70S ribosome. The sequence is that of Large ribosomal subunit protein uL2 from Methanosphaera stadtmanae (strain ATCC 43021 / DSM 3091 / JCM 11832 / MCB-3).